Consider the following 734-residue polypeptide: Sulfate transporter (734 aa).

Polar residues predominate over residues 1–11; the sequence is MSLKNGEQNDL. The segment at 1–38 is disordered; that stretch reads MSLKNGEQNDLSPKDSVKGNDQYRSPSGIHVEHEEESR. Phosphoserine is present on residues S12 and S16. The next 2 helical transmembrane spans lie at 113–133 and 138–158; these read MMSGLIVGILLVPQSIAYSLL and PIYGLYTSFFASLIYFILGTS. N-linked (GlcNAc...) asparagine glycosylation is found at N194 and N204. Transmembrane regions (helical) follow at residues 222–242, 247–267, 269–289, 292–312, 379–399, 415–435, 453–473, and 519–539; these read FVAGVYQVAMGFFQVGFVSVY, LLGGFVTGASFTILTSQVKYL, GLSLPRSGGVGSLITTWIHIF, IHKTNICDLITSLLCLLVLLP, VDAIAIAIIGFAITVSLSEMF, AIGFCNIIPSFFHSFTTSAAL, VMTALVLLLVLLVIAPLFFSL, and LISTEIGLLTGVCFSMFCVIL. The STAS domain occupies 563–714; that stretch reads AYKNLQAKSG…YSVYEAMTFA (152 aa).

It belongs to the SLC26A/SulP transporter (TC 2.A.53) family. Post-translationally, N-glycosylated.

The protein resides in the cell membrane. The protein localises to the apical cell membrane. The enzyme catalyses oxalate(in) + sulfate(out) = oxalate(out) + sulfate(in). The catalysed reaction is sulfate(out) + 2 chloride(in) = sulfate(in) + 2 chloride(out). It carries out the reaction oxalate(out) + 2 chloride(in) = oxalate(in) + 2 chloride(out). It catalyses the reaction bromide(in) + chloride(out) = bromide(out) + chloride(in). The enzyme catalyses nitrate(in) + chloride(out) = nitrate(out) + chloride(in). The catalysed reaction is iodide(in) + chloride(out) = iodide(out) + chloride(in). In terms of biological role, sulfate transporter which mediates sulfate uptake into chondrocytes in order to maintain adequate sulfation of proteoglycans which is needed for cartilage development. Mediates electroneutral anion exchange of sulfate ions for oxalate ions, sulfate and oxalate ions for chloride and/or hydroxyl ions and chloride ions for bromide, iodide and nitrate ions. The coupling of sulfate transport to both hydroxyl and chloride ions likely serves to ensure transport at both acidic pH when most sulfate uptake is mediated by sulfate-hydroxide exchange and alkaline pH when most sulfate uptake is mediated by sulfate-chloride exchange. Essential for chondrocyte proliferation, differentiation and cell size expansion. The polypeptide is Sulfate transporter (SLC26A2) (Ovis aries (Sheep)).